The following is a 395-amino-acid chain: 1-deoxy-D-xylulose 5-phosphate reductoisomerase (395 aa).

NADPH-binding residues include threonine 10, glycine 11, serine 12, isoleucine 13, alanine 36, and asparagine 123. Residue lysine 124 participates in 1-deoxy-D-xylulose 5-phosphate binding. NADPH is bound at residue glutamate 125. Residue aspartate 149 participates in Mn(2+) binding. Serine 150, glutamate 151, serine 185, and histidine 208 together coordinate 1-deoxy-D-xylulose 5-phosphate. Mn(2+) is bound at residue glutamate 151. An NADPH-binding site is contributed by glycine 214. 1-deoxy-D-xylulose 5-phosphate is bound by residues serine 221, asparagine 226, lysine 227, and glutamate 230. Glutamate 230 provides a ligand contact to Mn(2+).

The protein belongs to the DXR family. Requires Mg(2+) as cofactor. Mn(2+) serves as cofactor.

The catalysed reaction is 2-C-methyl-D-erythritol 4-phosphate + NADP(+) = 1-deoxy-D-xylulose 5-phosphate + NADPH + H(+). Its pathway is isoprenoid biosynthesis; isopentenyl diphosphate biosynthesis via DXP pathway; isopentenyl diphosphate from 1-deoxy-D-xylulose 5-phosphate: step 1/6. In terms of biological role, catalyzes the NADPH-dependent rearrangement and reduction of 1-deoxy-D-xylulose-5-phosphate (DXP) to 2-C-methyl-D-erythritol 4-phosphate (MEP). The sequence is that of 1-deoxy-D-xylulose 5-phosphate reductoisomerase from Shewanella amazonensis (strain ATCC BAA-1098 / SB2B).